Reading from the N-terminus, the 182-residue chain is Sec-independent protein translocase protein TatB (182 aa).

A helical transmembrane segment spans residues 1 to 21; the sequence is MFDIGFSELLLVFVIGLIVLG. Disordered regions lie at residues 88–107 and 121–182; these read AAESMKRTYSANDPEQASDE and TQHE…SDKP. Over residues 168-182 the composition is skewed to low complexity; sequence AAPVVESSPSSSDKP.

This sequence belongs to the TatB family. In terms of assembly, the Tat system comprises two distinct complexes: a TatABC complex, containing multiple copies of TatA, TatB and TatC subunits, and a separate TatA complex, containing only TatA subunits. Substrates initially bind to the TatABC complex, which probably triggers association of the separate TatA complex to form the active translocon.

It is found in the cell inner membrane. Functionally, part of the twin-arginine translocation (Tat) system that transports large folded proteins containing a characteristic twin-arginine motif in their signal peptide across membranes. Together with TatC, TatB is part of a receptor directly interacting with Tat signal peptides. TatB may form an oligomeric binding site that transiently accommodates folded Tat precursor proteins before their translocation. In Salmonella typhi, this protein is Sec-independent protein translocase protein TatB.